The sequence spans 338 residues: Nucleoid-associated protein VSAL_I1059 (338 aa).

A disordered region spans residues 319–338 (KGTPPNLKDQLTRRLGSSES).

The protein belongs to the YejK family.

Its subcellular location is the cytoplasm. It localises to the nucleoid. This is Nucleoid-associated protein VSAL_I1059 from Aliivibrio salmonicida (strain LFI1238) (Vibrio salmonicida (strain LFI1238)).